The sequence spans 250 residues: Ribosomal RNA small subunit methyltransferase J (250 aa).

S-adenosyl-L-methionine contacts are provided by residues 96-97 (RD) and Asp-168.

It belongs to the methyltransferase superfamily. RsmJ family.

The protein resides in the cytoplasm. The catalysed reaction is guanosine(1516) in 16S rRNA + S-adenosyl-L-methionine = N(2)-methylguanosine(1516) in 16S rRNA + S-adenosyl-L-homocysteine + H(+). Its function is as follows. Specifically methylates the guanosine in position 1516 of 16S rRNA. This Neisseria meningitidis serogroup C (strain 053442) protein is Ribosomal RNA small subunit methyltransferase J.